Reading from the N-terminus, the 268-residue chain is MSISQNNFLTMFPVTYTFENGVYSTIINQNTIQTPIPNPIQHHIQNHIQTSIPNTNLLLENVQTDVQKLMVPLIDQQFHIPTSTPLQLAPIPTQIQSQLQPQISQIPIHNQPQIQIQSQVQPQLPTQSQPKPSSKASLDTSSNAFKKYVNPFAPEATVPLPVELEDQYGPYSSSVWKRNERERCRVRNVNDGYERLRKHLPVHFDEKRISKVDTLRLAIRYIKHLDNLLRSELHQYNCKCFNGFQEESEGNILIDISTFNFNSSNNAM.

A compositionally biased stretch (low complexity) spans 117–130; the sequence is QSQVQPQLPTQSQP. Residues 117–140 are disordered; the sequence is QSQVQPQLPTQSQPKPSSKASLDT. Over residues 131 to 140 the composition is skewed to polar residues; it reads KPSSKASLDT. The 53-residue stretch at 173 to 225 folds into the bHLH domain; sequence SSVWKRNERERCRVRNVNDGYERLRKHLPVHFDEKRISKVDTLRLAIRYIKHL.

As to expression, expressed in the gland cells of the pharynx and weakly in the pharyngeal neuron.

It is found in the nucleus. Transcription factor that regulates the development of the g2 pharyngeal gland cells and pharyngeal gland function and thereby is required for feeding. Required for the expression of a number of genes in the pharyngeal gland, possibly by binding to the E box motif (5'-CANNTG-3') in the promoter region of these genes. Positively regulates the expression of genes encoding mucin-like proteins, which lubricate the pharyngeal tract to ensure efficient passage of the bacterial food source. Exhibits pharyngeal gland-specific positive autoregulation activity. This chain is Helix-loop-helix protein 6 (hlh-6), found in Caenorhabditis elegans.